Here is a 406-residue protein sequence, read N- to C-terminus: NAC transcription factor NAM-1 (406 aa).

Polar residues predominate over residues 1–11 (MGSPDSSSGSA). Residues 1–40 (MGSPDSSSGSAQKPPRHQHQHQPPPPRRQGSAPELPPGFR) form a disordered region. Residues 35–204 (LPPGFRFHPT…DWVLCRIYKK (170 aa)) enclose the NAC domain. A DNA-binding region spans residues 137–210 (VGVKKALVFY…IYKKTSKAAA (74 aa)).

It localises to the nucleus. In terms of biological role, transcription factor of the NAC family associated with the grain protein content (GPC). Accelerates senescence and increases nutrient remobilization from leaves to developing grains. Sequences of 11 European varieties of H.vulgare tested belongs to the same haplotype while the sequence found in H.spontaneum, an ancestor of the cultivated H.vulgare which has a higher GPC, belongs to an other haplotype. This Hordeum vulgare subsp. vulgare (Domesticated barley) protein is NAC transcription factor NAM-1 (NAM-1).